Reading from the N-terminus, the 192-residue chain is Peptidyl-tRNA hydrolase (192 aa).

Position 14 (tyrosine 14) interacts with tRNA. Histidine 19 functions as the Proton acceptor in the catalytic mechanism. Positions 61, 63, and 107 each coordinate tRNA.

This sequence belongs to the PTH family. Monomer.

Its subcellular location is the cytoplasm. It catalyses the reaction an N-acyl-L-alpha-aminoacyl-tRNA + H2O = an N-acyl-L-amino acid + a tRNA + H(+). Hydrolyzes ribosome-free peptidyl-tRNAs (with 1 or more amino acids incorporated), which drop off the ribosome during protein synthesis, or as a result of ribosome stalling. Functionally, catalyzes the release of premature peptidyl moieties from peptidyl-tRNA molecules trapped in stalled 50S ribosomal subunits, and thus maintains levels of free tRNAs and 50S ribosomes. In Wolinella succinogenes (strain ATCC 29543 / DSM 1740 / CCUG 13145 / JCM 31913 / LMG 7466 / NCTC 11488 / FDC 602W) (Vibrio succinogenes), this protein is Peptidyl-tRNA hydrolase.